A 144-amino-acid polypeptide reads, in one-letter code: Large ribosomal subunit protein uL15 (144 aa).

Positions 1-60 (MRLNSLRPAAGSRPDANRVGRGAGTGNGKTAGRGHKGQHSRSGGFTKVGFEGGQMPLQRR) are disordered. Gly residues predominate over residues 21–31 (RGAGTGNGKTA).

It belongs to the universal ribosomal protein uL15 family. As to quaternary structure, part of the 50S ribosomal subunit.

Functionally, binds to the 23S rRNA. This Alkalilimnicola ehrlichii (strain ATCC BAA-1101 / DSM 17681 / MLHE-1) protein is Large ribosomal subunit protein uL15.